The primary structure comprises 314 residues: Putative SET domain-containing protein L222 (314 aa).

Residues 23 to 172 (EYIQVIYQNP…ANTEITISYG (150 aa)) enclose the SET domain.

The protein belongs to the class V-like SAM-binding methyltransferase superfamily.

This Acanthamoeba polyphaga mimivirus (APMV) protein is Putative SET domain-containing protein L222.